The primary structure comprises 490 residues: Katanin p60 ATPase-containing subunit A-like 1 (490 aa).

M1 carries the N-acetylmethionine modification. A disordered region spans residues 87 to 182; sequence SCQDEPVRDP…ASDGEIPKFD (96 aa). Residues 116–127 show a composition bias toward basic and acidic residues; sequence SNREVRPLRKDM. Residues 128-139 show a composition bias toward low complexity; the sequence is AGVGARGPVGRA. The segment covering 143–169 has biased composition (basic and acidic residues); sequence SKSEKPSTSRDKDNRARGKDDKGRKNM. The residue at position 174 (S174) is a Phosphoserine. Position 248–255 (248–255) interacts with ATP; it reads GPPGTGKT.

This sequence belongs to the AAA ATPase family. Katanin p60 subunit A1 subfamily. A-like 1 sub-subfamily. In terms of assembly, interacts with KATNB1 and KATNBL1.

The protein localises to the cytoplasm. The protein resides in the cytoskeleton. It localises to the spindle pole. It is found in the spindle. The enzyme catalyses n ATP + n H2O + a microtubule = n ADP + n phosphate + (n+1) alpha/beta tubulin heterodimers.. Regulates microtubule dynamics in Sertoli cells, a process that is essential for spermiogenesis and male fertility. Severs microtubules in an ATP-dependent manner, promoting rapid reorganization of cellular microtubule arrays. Has microtubule-severing activity in vitro. The sequence is that of Katanin p60 ATPase-containing subunit A-like 1 from Otolemur garnettii (Small-eared galago).